A 119-amino-acid polypeptide reads, in one-letter code: Anamorsin homolog (119 aa).

A disordered region spans residues 33-119 (LKQATKGEDC…KVKLNLTDDI (87 aa)). [2Fe-2S] cluster contacts are provided by C42, C49, C52, and C54. The tract at residues 42–54 (CTTRRRACKNCVC) is fe-S binding site A. Residues C81, C84, C92, and C95 each contribute to the [4Fe-4S] cluster site. Short sequence motifs (cx2C motif) lie at residues 81 to 84 (CGNC) and 92 to 95 (CANC). The fe-S binding site B stretch occupies residues 81–95 (CGNCAKGDAFRCANC).

This sequence belongs to the anamorsin family. Monomer. The cofactor is [2Fe-2S] cluster. Requires [4Fe-4S] cluster as cofactor.

It is found in the cytoplasm. The protein localises to the mitochondrion intermembrane space. Its function is as follows. Component of the cytosolic iron-sulfur (Fe-S) protein assembly (CIA) machinery. Required for the maturation of extramitochondrial Fe-S proteins. Part of an electron transfer chain functioning in an early step of cytosolic Fe-S biogenesis, facilitating the de novo assembly of a [4Fe-4S] cluster on the cytosolic Fe-S scaffold complex. Electrons are transferred from NADPH via a FAD- and FMN-containing diflavin oxidoreductase. Together with the diflavin oxidoreductase, also required for the assembly of the diferric tyrosyl radical cofactor of ribonucleotide reductase (RNR), probably by providing electrons for reduction during radical cofactor maturation in the catalytic small subunit. The protein is Anamorsin homolog of Leishmania braziliensis.